The chain runs to 104 residues: Protein RnfH (104 aa).

Residues 80–104 (PLTADPKLNRKRRAKEKASAGKASN) form a disordered region.

Belongs to the UPF0125 (RnfH) family.

In Alcanivorax borkumensis (strain ATCC 700651 / DSM 11573 / NCIMB 13689 / SK2), this protein is Protein RnfH.